Consider the following 341-residue polypeptide: D-aspartate oxidase (341 aa).

8 residues coordinate FAD: Asp-36, Arg-37, Thr-43, Ser-44, Met-50, Gly-307, Ile-311, and Ser-312. A Microbody targeting signal motif is present at residues 339 to 341 (SKL).

It belongs to the DAMOX/DASOX family. Dimer or tetramer. Interacts with PEX5; the interaction is direct and required for localization of DDO to the peroxisome. The cofactor is FAD. In terms of tissue distribution, expressed in the small intestine (at protein level). Expressed in the ependymal cell layer of the telencephalic ventricles, hippocampus, thalamus, cerebellum, midbrain region, pons, olfactory bulbs, and cortex. Repressed in the testis. Expressed in the kidney, liver, stomach, pancreas, uterus, lactating breast, involuting mammary gland, brain, heart, lung, and skin. As to expression, expressed in kidney, liver, pancreas, and in the mammary gland regardless of lactation status.

The protein resides in the peroxisome matrix. It is found in the cytoplasm. Its subcellular location is the cytosol. It carries out the reaction D-aspartate + O2 + H2O = oxaloacetate + H2O2 + NH4(+). It catalyses the reaction D-glutamate + O2 + H2O = H2O2 + 2-oxoglutarate + NH4(+). Inhibited by the benzodiazepine olanzapine; chronic systemic administration of the benzodiazepine increases levels of D-aspartate and L-glutamate in the prefrontal cortex. Efficiently inhibited by 5-aminonicotinic acid (5-AN) and 1,4-Dihydropyrido[2,3-b]pyrazine-2,3-dione (DPPD). Inhibited by aminooxyacetic acid, thiolactomycin, anthranilic acid, malonate, meso-tartrate and L-tartrate. Benzoate has no effect on activity. Selectively catalyzes the oxidative deamination of acidic amino acids. Suppresses the level of D-aspartate in the brain, an amino acid that can act as an agonist for glutamate receptors. Protects the organism from the toxicity of D-amino acids. May also function in the intestine. Its function is as follows. Selectively catalyzes the oxidative deamination of acidic amino acids. Functionally, does not exhibit D-aspartate oxidase activity. In Mus musculus (Mouse), this protein is D-aspartate oxidase (Ddo).